Consider the following 213-residue polypeptide: N-(5'-phosphoribosyl)anthranilate isomerase (213 aa).

This sequence belongs to the TrpF family.

The enzyme catalyses N-(5-phospho-beta-D-ribosyl)anthranilate = 1-(2-carboxyphenylamino)-1-deoxy-D-ribulose 5-phosphate. Its pathway is amino-acid biosynthesis; L-tryptophan biosynthesis; L-tryptophan from chorismate: step 3/5. This chain is N-(5'-phosphoribosyl)anthranilate isomerase, found in Caulobacter sp. (strain K31).